A 140-amino-acid chain; its full sequence is Nucleoside diphosphate kinase (140 aa).

Residues Lys11, Phe59, Arg87, Thr93, Arg104, and Asn114 each contribute to the ATP site. Catalysis depends on His117, which acts as the Pros-phosphohistidine intermediate.

This sequence belongs to the NDK family. In terms of assembly, homotetramer. The cofactor is Mg(2+).

The protein localises to the cytoplasm. The catalysed reaction is a 2'-deoxyribonucleoside 5'-diphosphate + ATP = a 2'-deoxyribonucleoside 5'-triphosphate + ADP. It catalyses the reaction a ribonucleoside 5'-diphosphate + ATP = a ribonucleoside 5'-triphosphate + ADP. Functionally, major role in the synthesis of nucleoside triphosphates other than ATP. The ATP gamma phosphate is transferred to the NDP beta phosphate via a ping-pong mechanism, using a phosphorylated active-site intermediate. The sequence is that of Nucleoside diphosphate kinase from Rhodopseudomonas palustris (strain BisB18).